The primary structure comprises 326 residues: Vitamin B12 import system permease protein BtuC (326 aa).

The next 9 helical transmembrane spans lie at 19-39, 61-81, 88-108, 112-132, 146-166, 184-204, 240-260, 274-294, and 302-322; these read LSVL…LWIL, LAVL…QALF, PGLL…VLLG, LPNW…TLIL, LLAG…AIYF, GGVD…LLWI, GWMV…GLVI, VLLP…DIVA, and ELPI…WLLL.

Belongs to the binding-protein-dependent transport system permease family. FecCD subfamily. As to quaternary structure, the complex is composed of two ATP-binding proteins (BtuD), two transmembrane proteins (BtuC) and a solute-binding protein (BtuF).

The protein resides in the cell inner membrane. Part of the ABC transporter complex BtuCDF involved in vitamin B12 import. Involved in the translocation of the substrate across the membrane. This Escherichia coli O127:H6 (strain E2348/69 / EPEC) protein is Vitamin B12 import system permease protein BtuC.